Here is a 197-residue protein sequence, read N- to C-terminus: Protein GrpE (197 aa).

Positions Met1 to Arg40 are disordered.

It belongs to the GrpE family. Homodimer.

The protein localises to the cytoplasm. Functionally, participates actively in the response to hyperosmotic and heat shock by preventing the aggregation of stress-denatured proteins, in association with DnaK and GrpE. It is the nucleotide exchange factor for DnaK and may function as a thermosensor. Unfolded proteins bind initially to DnaJ; upon interaction with the DnaJ-bound protein, DnaK hydrolyzes its bound ATP, resulting in the formation of a stable complex. GrpE releases ADP from DnaK; ATP binding to DnaK triggers the release of the substrate protein, thus completing the reaction cycle. Several rounds of ATP-dependent interactions between DnaJ, DnaK and GrpE are required for fully efficient folding. The polypeptide is Protein GrpE (Escherichia coli (strain K12 / DH10B)).